The primary structure comprises 62 residues: Photosystem II reaction center protein H (62 aa).

A helical transmembrane segment spans residues 30–50 (PVMAGIGFMLLIFLVTILQIY).

The protein belongs to the PsbH family. As to quaternary structure, PSII is composed of 1 copy each of membrane proteins PsbA, PsbB, PsbC, PsbD, PsbE, PsbF, PsbH, PsbI, PsbJ, PsbK, PsbL, PsbM, PsbT, PsbX, PsbY, Psb30/Ycf12, peripheral proteins PsbO, CyanoQ (PsbQ), PsbU, PsbV and a large number of cofactors. It forms dimeric complexes.

The protein localises to the cellular thylakoid membrane. Functionally, one of the components of the core complex of photosystem II (PSII), required for its stability and/or assembly. PSII is a light-driven water:plastoquinone oxidoreductase that uses light energy to abstract electrons from H(2)O, generating O(2) and a proton gradient subsequently used for ATP formation. It consists of a core antenna complex that captures photons, and an electron transfer chain that converts photonic excitation into a charge separation. This Prochlorococcus marinus (strain MIT 9303) protein is Photosystem II reaction center protein H.